The sequence spans 47 residues: RDCESDSHKFHGACFSDTNCANVCQTEGFTAGKCVGVQRHCHCTKDC.

Disulfide bonds link cysteine 3-cysteine 47, cysteine 14-cysteine 34, cysteine 20-cysteine 41, and cysteine 24-cysteine 43.

Functionally, plant defense peptide. This Triticum kiharae (Wheat) protein is Defensin Tk-AMP-D1.1.